A 102-amino-acid chain; its full sequence is ATP-dependent Clp protease adapter protein ClpS (102 aa).

The protein belongs to the ClpS family. In terms of assembly, binds to the N-terminal domain of the chaperone ClpA.

In terms of biological role, involved in the modulation of the specificity of the ClpAP-mediated ATP-dependent protein degradation. This is ATP-dependent Clp protease adapter protein ClpS from Shewanella amazonensis (strain ATCC BAA-1098 / SB2B).